Here is a 42-residue protein sequence, read N- to C-terminus: Large ribosomal subunit protein P2 (42 aa).

Belongs to the eukaryotic ribosomal protein P1/P2 family. As to quaternary structure, P1 and P2 exist as dimers at the large ribosomal subunit. Phosphorylated.

In terms of biological role, plays an important role in the elongation step of protein synthesis. The chain is Large ribosomal subunit protein P2 from Triticum aestivum (Wheat).